Consider the following 648-residue polypeptide: MRYQGINEWLGGAKKLTTANGEIGAIYLSAAPPTDAARADAKAVDFTAGWPSAIVDCADATRAKQNYLWVGDNVVHIGAKHVPLLDLWGGTGDAWQQFVGYACPMLDLCRAWGLGYASASVTTGSLQGYQPSAFLDVEQQQFAKDNLNLYGDNCLDLATSSSAQRAFLEQCMGCALPEDCIFGWYVKMDWEGSAVADAYAAIRVQGFATVMAPWQSVGGAGYVYARVPQKGAWMGVNLLAYVHGTSGQPAYGIPMTLSGFTGNMGQVASKWLMLPLLMIVDPHVVQILAALGVKRGTKSDPRTTDVYADPKVPASRISGPMINGTVAPPATIPATIPVPLAPLGGAGGPGAQGFQVYPVFTWGLPEFMTDVTIEGTVTADSNGLHVVDDVRNYVWNGTALAAIEQVNAADGRVTLTDSERAQLASLTVRTASLRQQLSVGADPLSKTSIWRRAQKADYDLLSQQIIEADTVKNLPAVTFAQANKAAGGQSETLWHQMYRVNDIAGDQVTAIQITGTMATGIRWSATAGGLVVDADEQDAVIAISSGKPVKNSSDLPTADAVNYLFGITADDMPGIVSSQKEMNSEFEEGFLQKARLWNPRKLVENVQNAYFLMVYARDRKQFHSLVASSLAMAKLGVSTRACKESYGC.

In terms of assembly, interacts with P6.

It is found in the virion membrane. Its function is as follows. P3 protein is necessary for adsorption onto host cells. Attaches to a type IV pilus of the host. In Pseudomonas savastanoi pv. phaseolicola (Pseudomonas syringae pv. phaseolicola), this protein is Spike protein P3 (P3).